We begin with the raw amino-acid sequence, 114 residues long: Photosystem II reaction center Psb28 protein (114 aa).

It belongs to the Psb28 family. As to quaternary structure, part of the photosystem II complex.

The protein resides in the plastid. Its subcellular location is the chloroplast thylakoid membrane. The sequence is that of Photosystem II reaction center Psb28 protein from Gracilaria tenuistipitata var. liui (Red alga).